Consider the following 306-residue polypeptide: Homoserine kinase (306 aa).

91–101 contributes to the ATP binding site; that stretch reads PLARGLGSSAT.

Belongs to the GHMP kinase family. Homoserine kinase subfamily.

Its subcellular location is the cytoplasm. The catalysed reaction is L-homoserine + ATP = O-phospho-L-homoserine + ADP + H(+). It participates in amino-acid biosynthesis; L-threonine biosynthesis; L-threonine from L-aspartate: step 4/5. Catalyzes the ATP-dependent phosphorylation of L-homoserine to L-homoserine phosphate. This chain is Homoserine kinase, found in Synechocystis sp. (strain ATCC 27184 / PCC 6803 / Kazusa).